Consider the following 213-residue polypeptide: Ferric nitrobindin-like protein (213 aa).

Residues Val-17–Asp-42 form a disordered region. A GXWXGXG motif is present at residues Gly-65 to Gly-71.

It belongs to the nitrobindin family.

This Corynebacterium jeikeium (strain K411) protein is Ferric nitrobindin-like protein.